Here is a 206-residue protein sequence, read N- to C-terminus: Large ribosomal subunit protein uL4 (206 aa).

A disordered region spans residues 60 to 84; that stretch reads TAKPFKQKGTGHARQGSKRSPQFRG. The segment covering 64–76 has biased composition (basic residues); it reads FKQKGTGHARQGS.

The protein belongs to the universal ribosomal protein uL4 family. Part of the 50S ribosomal subunit.

One of the primary rRNA binding proteins, this protein initially binds near the 5'-end of the 23S rRNA. It is important during the early stages of 50S assembly. It makes multiple contacts with different domains of the 23S rRNA in the assembled 50S subunit and ribosome. Functionally, forms part of the polypeptide exit tunnel. The chain is Large ribosomal subunit protein uL4 from Rhodospirillum rubrum (strain ATCC 11170 / ATH 1.1.1 / DSM 467 / LMG 4362 / NCIMB 8255 / S1).